A 141-amino-acid chain; its full sequence is Nucleoside diphosphate kinase (141 aa).

Positions 11, 59, 87, 93, 104, and 114 each coordinate ATP. H117 serves as the catalytic Pros-phosphohistidine intermediate.

It belongs to the NDK family. Homotetramer. Mg(2+) is required as a cofactor.

It localises to the cytoplasm. The catalysed reaction is a 2'-deoxyribonucleoside 5'-diphosphate + ATP = a 2'-deoxyribonucleoside 5'-triphosphate + ADP. It carries out the reaction a ribonucleoside 5'-diphosphate + ATP = a ribonucleoside 5'-triphosphate + ADP. Functionally, major role in the synthesis of nucleoside triphosphates other than ATP. The ATP gamma phosphate is transferred to the NDP beta phosphate via a ping-pong mechanism, using a phosphorylated active-site intermediate. This Paracidovorax citrulli (strain AAC00-1) (Acidovorax citrulli) protein is Nucleoside diphosphate kinase.